A 229-amino-acid chain; its full sequence is Cell division protein FtsQ (229 aa).

A helical transmembrane segment spans residues Met1–Leu21. At Glu22 to Lys229 the chain is on the periplasmic side. In terms of domain architecture, POTRA spans Asn27–His97.

Belongs to the FtsQ/DivIB family. FtsQ subfamily. Part of a complex composed of FtsB, FtsL and FtsQ.

It localises to the cell inner membrane. Functionally, essential cell division protein. May link together the upstream cell division proteins, which are predominantly cytoplasmic, with the downstream cell division proteins, which are predominantly periplasmic. May control correct divisome assembly. In Actinobacillus pleuropneumoniae serotype 3 (strain JL03), this protein is Cell division protein FtsQ.